The following is a 190-amino-acid chain: uncharacterized protein (190 aa).

4 consecutive transmembrane segments (helical) span residues 15–35 (LVMSCSVTLLFSSSLSFVLAI), 58–78 (FSSFFFFFTTSPDSSPVGVLI), 94–114 (FFSASSLYSSIDLGSILYFAF), and 148–168 (FLFFVGSSKAFLTCSSLSFFV).

It is found in the membrane. This is an uncharacterized protein from Saccharomyces cerevisiae (strain ATCC 204508 / S288c) (Baker's yeast).